The sequence spans 274 residues: MQNITQSWFVQGMIKATTDAWLKGWDERNGGNLTLRLDDADIAPYKDNFHAQPRYIPLSQPMPLLANTPFIVTGSGKFFRNVQLDPAANLGVVKVDSDGAGYHILWGLTNEAVPTSELPAHFLSHCERIKATNGKDRVIMHCHATNLIALTYVLENDTAVFTRQLWEGSTECLVVFPDGVGILPWMVPGTDEIGQATAQEMQKHSLVLWPFHGVFGSGSTLDETFGLIDTAEKSAQVLVKVYSMGGMKQTISREELIALGKRFGVTPLASALAL.

Residue E117 is part of the active site. 3 residues coordinate Zn(2+): H141, H143, and H212.

It belongs to the aldolase class II family. RhaD subfamily. In terms of assembly, homotetramer. It depends on Zn(2+) as a cofactor.

The protein resides in the cytoplasm. It catalyses the reaction L-rhamnulose 1-phosphate = (S)-lactaldehyde + dihydroxyacetone phosphate. Its pathway is carbohydrate degradation; L-rhamnose degradation; glycerone phosphate from L-rhamnose: step 3/3. In terms of biological role, catalyzes the reversible cleavage of L-rhamnulose-1-phosphate to dihydroxyacetone phosphate (DHAP) and L-lactaldehyde. This is Rhamnulose-1-phosphate aldolase from Escherichia coli (strain SE11).